The following is a 184-amino-acid chain: uncharacterized protein (184 aa).

A helical membrane pass occupies residues 35–55 (LSFLIYILYTFSISGLSTFVI).

It localises to the membrane. This is an uncharacterized protein from Schizosaccharomyces pombe (strain 972 / ATCC 24843) (Fission yeast).